Here is a 597-residue protein sequence, read N- to C-terminus: Golgin subfamily A member 8C (597 aa).

Disordered regions lie at residues 1–80 (MAEE…VPDS) and 96–120 (KQQKKQVEHQLEEEKKANNEKQKAE). Polar residues predominate over residues 38-50 (TNGSIHETATSGG). Over residues 53-70 (SPGDSSSTSSSLHAPQSP) the composition is skewed to low complexity. 3 coiled-coil regions span residues 81-141 (RSVK…NTDL), 199-255 (EWKL…SQEV), and 296-394 (SEVE…GKRL). Positions 100-120 (KQVEHQLEEEKKANNEKQKAE) are enriched in basic and acidic residues. Disordered regions lie at residues 390-422 (LGKRLAHPVASAQKEPEAAVPAPGPGGESSGFM), 457-498 (PITK…GVAA), and 549-576 (PVQGETREGSPHDKPTAQPIVQDHQEHP). Gly residues predominate over residues 470–483 (PGGGHHQAGPGQGG). Residues 553 to 563 (ETREGSPHDKP) are compositionally biased toward basic and acidic residues.

This sequence belongs to the GOLGA8 family.

The sequence is that of Golgin subfamily A member 8C (GOLGA8CP) from Homo sapiens (Human).